The sequence spans 168 residues: Photosystem I assembly protein Ycf3 (168 aa).

TPR repeat units lie at residues 35-68 (AFTY…EIDP), 72-105 (SYIL…NPFL), and 120-153 (GEQA…TPGN).

The protein belongs to the Ycf3 family.

Its subcellular location is the plastid. The protein resides in the chloroplast thylakoid membrane. Its function is as follows. Essential for the assembly of the photosystem I (PSI) complex. May act as a chaperone-like factor to guide the assembly of the PSI subunits. In Gossypium barbadense (Sea Island cotton), this protein is Photosystem I assembly protein Ycf3.